The sequence spans 182 residues: uncharacterized protein (182 aa).

A disordered region spans residues R151–Q172. Residues F157 to P169 are compositionally biased toward basic and acidic residues.

This is an uncharacterized protein from Mycobacterium tuberculosis (strain CDC 1551 / Oshkosh).